Reading from the N-terminus, the 454-residue chain is Chromosomal replication initiator protein DnaA (454 aa).

Residues 1–79 (MSLCLWKQCL…NSPFIKFKVY (79 aa)) are domain I, interacts with DnaA modulators. The domain II stretch occupies residues 79–117 (YQTSKEKKFKKNILQKIQNLNAKPIWDKIPIFKKSSHRS). Residues 118–334 (NINKKHSFEN…GALNRVIVNA (217 aa)) form a domain III, AAA+ region region. 4 residues coordinate ATP: G162, G164, K165, and T166. Positions 335 to 454 (NFTHRSITVE…FSNLIRTLSV (120 aa)) are domain IV, binds dsDNA.

This sequence belongs to the DnaA family. As to quaternary structure, oligomerizes as a right-handed, spiral filament on DNA at oriC.

It localises to the cytoplasm. Its function is as follows. Plays an essential role in the initiation and regulation of chromosomal replication. ATP-DnaA binds to the origin of replication (oriC) to initiate formation of the DNA replication initiation complex once per cell cycle. Binds the DnaA box (a 9 base pair repeat at the origin) and separates the double-stranded (ds)DNA. Forms a right-handed helical filament on oriC DNA; dsDNA binds to the exterior of the filament while single-stranded (ss)DNA is stabiized in the filament's interior. The ATP-DnaA-oriC complex binds and stabilizes one strand of the AT-rich DNA unwinding element (DUE), permitting loading of DNA polymerase. After initiation quickly degrades to an ADP-DnaA complex that is not apt for DNA replication. Binds acidic phospholipids. In Buchnera aphidicola subsp. Schizaphis graminum (strain Sg), this protein is Chromosomal replication initiator protein DnaA.